The primary structure comprises 365 residues: MDYTVSSLQCFFLVLCLSLLVCSNSETSYKSNKKPILINFGDSNSDTGGVLAGVGLPIGLPHGITFFHRGTGRLGDGRLIVDFYCEHLKMTYLSPYLDSLSPNFKRGVNFAVSGATALPIFSFPLAIQIRQFVHFKNRSQELISSGRRDLIDDNGFRNALYMIDIGQNDLLLALYDSNLTYAPVVEKIPSMLLEIKKAIQTVYLYGGRKFWVHNTGPLGCAPKELAIHLHNDSDLDPIGCFRVHNEVAKAFNKGLLSLCNELRSQFKDATLVYVDIYSIKYKLSADFKLYGFVDPLMACCGYGGRPNNYDRKATCGQPGSTICRDVTKAIVWDGVHYTEAANRFVVDAVLTNRYSYPKNSLDRFW.

The first 25 residues, 1 to 25 (MDYTVSSLQCFFLVLCLSLLVCSNS), serve as a signal peptide directing secretion. Catalysis depends on Ser43, which acts as the Nucleophile. Residues Asn137, Asn178, and Asn231 are each glycosylated (N-linked (GlcNAc...) asparagine). Catalysis depends on residues Asp333 and His336.

It belongs to the 'GDSL' lipolytic enzyme family.

It is found in the secreted. The polypeptide is GDSL esterase/lipase At3g62280 (Arabidopsis thaliana (Mouse-ear cress)).